The sequence spans 240 residues: Uridylate kinase (240 aa).

An ATP-binding site is contributed by 12–15 (KLSG). The interval 20 to 25 (GEQGNG) is involved in allosteric activation by GTP. Gly-54 serves as a coordination point for UMP. ATP contacts are provided by Gly-55 and Arg-59. UMP is bound by residues Asp-74 and 135–142 (TGNPYFST). Asn-163, Tyr-169, and Asp-172 together coordinate ATP.

It belongs to the UMP kinase family. As to quaternary structure, homohexamer. Interacts with BrxC.

Its subcellular location is the cytoplasm. The catalysed reaction is UMP + ATP = UDP + ADP. It functions in the pathway pyrimidine metabolism; CTP biosynthesis via de novo pathway; UDP from UMP (UMPK route): step 1/1. With respect to regulation, allosterically activated by GTP. Can also be activated by dGTP and 3'-anthraniloyl-2'-deoxyguanosine-5'-triphosphate (Ant-dGTP). Inhibited by UTP, 5-bromo-UTP and 5-iodo-UTP. In terms of biological role, catalyzes the reversible phosphorylation of UMP to UDP, with ATP or dATP as the most efficient phosphate donors. Is also able to phosphorylate 5-fluoro-UMP and 6-aza-UMP. In Bacillus subtilis (strain 168), this protein is Uridylate kinase (pyrH).